We begin with the raw amino-acid sequence, 610 residues long: Propanediol dehydratase-reactivating factor large subunit (610 aa).

Residue 11-13 participates in ATP binding; the sequence is NSS. Residues T105, D166, and D183 each contribute to the Mg(2+) site. ATP contacts are provided by residues 459–462, 557–558, and R591; these read EEIK and GS.

This sequence belongs to the DdrA/PduG family. In terms of assembly, forms a heterotetramer PduG(2)/PduH(2). The cofactor is Mg(2+).

It is found in the bacterial microcompartment. The catalysed reaction is ATP + H2O = ADP + phosphate + H(+). Its pathway is polyol metabolism; 1,2-propanediol degradation. Functionally, large subunit of the propanediol dehydratase-reactivating factor (DDR), which reactivates suicidally inhibited adenosylcobalamin-dependent propanediol dehydratase (diol dehydratase, DDH) found in the bacterial microcompartment (BMC) dedicated to 1,2-propanediol (1,2-PD) degradation. Reactivates inactivated DDH in the presence of ATP, Mg(2+) and free adenosylcobalamin (AdoCbl), by mediating the exchange of the tightly bound damaged cofactor AdoCbl for a free intact one. This subunit contains the adenosine nucleotide binding site. Its function is as follows. Expression of a cosmid containing the full 21-gene pdu operon in E.coli allows E.coli to grow on 1,2-propanediol (1,2-PD) with the appearance of bacterial microcompartments (BMC) in its cytoplasm. The 1,2-PD-specific bacterial microcompartment (BMC) concentrates low levels of 1,2-PD catabolic enzymes, concentrates volatile reaction intermediates thus enhancing pathway flux and keeps the level of toxic, mutagenic propionaldehyde low. This is Propanediol dehydratase-reactivating factor large subunit from Citrobacter freundii.